A 641-amino-acid polypeptide reads, in one-letter code: Isomalto-dextranase (641 aa).

The tat-type signal signal peptide spans 1 to 39 (MMNLSRRTLLTTGSAATLAYALGMAGSAQAATAVTARPG). The active-site Nucleophile is Asp227. The active-site Proton donor is Asp288. Residues 500–640 (TRYPAAFAAW…AINLNWIELD (141 aa)) form the CBM6 domain. The segment at 556-588 (SGYRYANATDDNTTSKTTTKKANPEKADRSTVD) is disordered. A compositionally biased stretch (low complexity) spans 561–576 (ANATDDNTTSKTTTKK). Residues 577–586 (ANPEKADRST) show a composition bias toward basic and acidic residues.

Belongs to the glycosyl hydrolase 27 family. Post-translationally, predicted to be exported by the Tat system. The position of the signal peptide cleavage has been experimentally proven.

Its subcellular location is the secreted. It carries out the reaction Hydrolysis of (1-&gt;6)-alpha-D-glucosidic linkages in polysaccharides, to remove successive isomaltose units from the non-reducing ends of the chains.. The polypeptide is Isomalto-dextranase (imd) (Arthrobacter globiformis).